A 179-amino-acid chain; its full sequence is Inner membrane-spanning protein YciB (179 aa).

5 consecutive transmembrane segments (helical) span residues 22-42, 50-70, 76-96, 121-141, and 149-169; these read IYAA…YSWV, MALI…FFHN, WKVT…QWVM, LAWA…AFWL, and FKVF…GIYI.

This sequence belongs to the YciB family.

It localises to the cell inner membrane. Functionally, plays a role in cell envelope biogenesis, maintenance of cell envelope integrity and membrane homeostasis. In Shigella boydii serotype 4 (strain Sb227), this protein is Inner membrane-spanning protein YciB.